We begin with the raw amino-acid sequence, 600 residues long: Glutamine--fructose-6-phosphate aminotransferase [isomerizing] (600 aa).

Residue cysteine 2 is the Nucleophile; for GATase activity of the active site. One can recognise a Glutamine amidotransferase type-2 domain in the interval 2-217; that stretch reads CGIVGYIGNE…DEELVIVRRD (216 aa). SIS domains follow at residues 283–422 and 452–590; these read IRAA…AAGK and IARD…VDKP. Residue lysine 595 is the For Fru-6P isomerization activity of the active site.

In terms of assembly, homodimer.

The protein resides in the cytoplasm. The catalysed reaction is D-fructose 6-phosphate + L-glutamine = D-glucosamine 6-phosphate + L-glutamate. Catalyzes the first step in hexosamine metabolism, converting fructose-6P into glucosamine-6P using glutamine as a nitrogen source. The sequence is that of Glutamine--fructose-6-phosphate aminotransferase [isomerizing] from Shouchella clausii (strain KSM-K16) (Alkalihalobacillus clausii).